The following is a 123-amino-acid chain: Urotensin-2 (123 aa).

Positions methionine 1–serine 20 are cleaved as a signal peptide. A propeptide spanning residues phenylalanine 21–threonine 104 is cleaved from the precursor. The segment at glutamate 63 to glutamine 91 is disordered. An intrachain disulfide couples cysteine 117 to cysteine 122.

This sequence belongs to the urotensin-2 family. Brain specific.

Its subcellular location is the secreted. Highly potent vasoconstrictor. This is Urotensin-2 (Uts2) from Rattus norvegicus (Rat).